Here is a 466-residue protein sequence, read N- to C-terminus: Proline--tRNA ligase (466 aa).

Belongs to the class-II aminoacyl-tRNA synthetase family. ProS type 3 subfamily. Homodimer.

It localises to the cytoplasm. The enzyme catalyses tRNA(Pro) + L-proline + ATP = L-prolyl-tRNA(Pro) + AMP + diphosphate. Functionally, catalyzes the attachment of proline to tRNA(Pro) in a two-step reaction: proline is first activated by ATP to form Pro-AMP and then transferred to the acceptor end of tRNA(Pro). The sequence is that of Proline--tRNA ligase from Picrophilus torridus (strain ATCC 700027 / DSM 9790 / JCM 10055 / NBRC 100828 / KAW 2/3).